The sequence spans 238 residues: Fatty acid metabolism regulator protein (238 aa).

Residues 6–74 form the HTH gntR-type domain; sequence KGPASFAEKY…HGKPTRVNNF (69 aa). A DNA-binding region (H-T-H motif) is located at residues 34–53; it reads ERELSELIGVTRTTLREVLQ.

In terms of assembly, homodimer.

The protein resides in the cytoplasm. Its function is as follows. Multifunctional regulator of fatty acid metabolism. In Shewanella baltica (strain OS223), this protein is Fatty acid metabolism regulator protein.